The following is a 291-amino-acid chain: ATP synthase gamma chain (291 aa).

It belongs to the ATPase gamma chain family. As to quaternary structure, F-type ATPases have 2 components, CF(1) - the catalytic core - and CF(0) - the membrane proton channel. CF(1) has five subunits: alpha(3), beta(3), gamma(1), delta(1), epsilon(1). CF(0) has three main subunits: a, b and c.

It is found in the cell inner membrane. Produces ATP from ADP in the presence of a proton gradient across the membrane. The gamma chain is believed to be important in regulating ATPase activity and the flow of protons through the CF(0) complex. This Aquifex aeolicus (strain VF5) protein is ATP synthase gamma chain.